An 85-amino-acid chain; its full sequence is UPF0297 protein CHY_0540 (85 aa).

The protein belongs to the UPF0297 family.

This is UPF0297 protein CHY_0540 from Carboxydothermus hydrogenoformans (strain ATCC BAA-161 / DSM 6008 / Z-2901).